We begin with the raw amino-acid sequence, 103 residues long: Small ribosomal subunit protein uS10 (103 aa).

It belongs to the universal ribosomal protein uS10 family. As to quaternary structure, part of the 30S ribosomal subunit.

In terms of biological role, involved in the binding of tRNA to the ribosomes. This is Small ribosomal subunit protein uS10 from Blochmanniella pennsylvanica (strain BPEN).